A 131-amino-acid chain; its full sequence is Small ribosomal subunit protein bS16 (131 aa).

A disordered region spans residues 87-131 (PGAEGTYRVPTANTKPPRIPGGGAAKAVEAPAEAPAEAETPASES). A compositionally biased stretch (low complexity) spans 111-131 (AKAVEAPAEAPAEAETPASES).

This sequence belongs to the bacterial ribosomal protein bS16 family.

The chain is Small ribosomal subunit protein bS16 from Kineococcus radiotolerans (strain ATCC BAA-149 / DSM 14245 / SRS30216).